A 261-amino-acid chain; its full sequence is 3-hydroxyacyl-CoA dehydrogenase type-2 (261 aa).

Ala2 is subject to N-acetylalanine. NAD(+) is bound by residues Ser20, Leu22, and Asp41. An N6-acetyllysine; alternate modification is found at Lys53. Lys53 carries the post-translational modification N6-succinyllysine; alternate. NAD(+) is bound at residue Val65. N6-acetyllysine is present on Lys69. NAD(+) is bound at residue Cys91. N6-acetyllysine occurs at positions 99 and 105. Ser155 is a binding site for substrate. The NAD(+) site is built by Tyr168, Lys172, Phe201, and Thr203. Catalysis depends on Tyr168, which acts as the Proton acceptor. Lys212 bears the N6-acetyllysine; alternate mark. Position 212 is an N6-succinyllysine; alternate (Lys212).

It belongs to the short-chain dehydrogenases/reductases (SDR) family. Homotetramer. Component of mitochondrial ribonuclease P, a complex composed of TRMT10C/MRPP1, HSD17B10/MRPP2 and PRORP/MRPP3. Interacts with TRMT10C/MRPP1; forming the MRPP1-MRPP2 subcomplex of the mitochondrial ribonuclease P complex.

The protein resides in the mitochondrion. Its subcellular location is the mitochondrion matrix. It is found in the mitochondrion nucleoid. It catalyses the reaction a (3S)-3-hydroxyacyl-CoA + NAD(+) = a 3-oxoacyl-CoA + NADH + H(+). It carries out the reaction (2S,3S)-3-hydroxy-2-methylbutanoyl-CoA + NAD(+) = 2-methyl-3-oxobutanoyl-CoA + NADH + H(+). The catalysed reaction is testosterone + NAD(+) = androst-4-ene-3,17-dione + NADH + H(+). The enzyme catalyses 5alpha-androstane-3alpha,17beta-diol + NAD(+) = 17beta-hydroxy-5alpha-androstan-3-one + NADH + H(+). It catalyses the reaction 17beta-estradiol + NAD(+) = estrone + NADH + H(+). It carries out the reaction cholate + NAD(+) = 3alpha,12alpha-dihydroxy-7-oxo-5beta-cholanate + NADH + H(+). The catalysed reaction is (3S)-3-hydroxybutanoyl-CoA + NAD(+) = acetoacetyl-CoA + NADH + H(+). The enzyme catalyses (3S)-hydroxyoctanoyl-CoA + NAD(+) = 3-oxooctanoyl-CoA + NADH + H(+). It catalyses the reaction (3S)-hydroxyhexadecanoyl-CoA + NAD(+) = 3-oxohexadecanoyl-CoA + NADH + H(+). It carries out the reaction 17beta-hydroxy-5alpha-androstan-3-one + NAD(+) = 5alpha-androstan-3,17-dione + NADH + H(+). The catalysed reaction is 5alpha-pregnan-20beta-ol-3-one + NAD(+) = 5alpha-pregnane-3,20-dione + NADH + H(+). The enzyme catalyses 3alpha-hydroxy-5alpha-pregnan-20-one + NAD(+) = 5alpha-pregnane-3,20-dione + NADH + H(+). It catalyses the reaction cortisone + NAD(+) = 17alpha-hydroxypregn-4-en-3,11,20-trione-21-al + NADH + H(+). It carries out the reaction 11-dehydrocorticosterone + NAD(+) = pregn-4-ene-3,11,20,21-tetraone + NADH + H(+). The catalysed reaction is cortisol + NAD(+) = 11beta,17alpha-dihydroxypregn-4-ene-3,20,21-trione + NADH + H(+). The enzyme catalyses chenodeoxycholate + NAD(+) = 7-oxolithocholate + NADH + H(+). It catalyses the reaction ursodeoxycholate + NAD(+) = 7-oxolithocholate + NADH + H(+). It carries out the reaction 3beta,7beta-dihydroxy-5beta-cholan-24-oate + NAD(+) = 3beta-hydroxy-7-oxo-5beta-cholan-24-oate + NADH + H(+). The protein operates within amino-acid degradation; L-isoleucine degradation. It participates in lipid metabolism; fatty acid beta-oxidation. It functions in the pathway steroid metabolism. Its pathway is lipid metabolism; bile acid biosynthesis. Mitochondrial dehydrogenase involved in pathways of fatty acid, branched-chain amino acid and steroid metabolism. Acts as (S)-3-hydroxyacyl-CoA dehydrogenase in mitochondrial fatty acid beta-oxidation, a major degradation pathway of fatty acids. Catalyzes the third step in the beta-oxidation cycle, namely the reversible conversion of (S)-3-hydroxyacyl-CoA to 3-ketoacyl-CoA. Preferentially accepts straight medium- and short-chain acyl-CoA substrates with highest efficiency for (3S)-hydroxybutanoyl-CoA. Acts as 3-hydroxy-2-methylbutyryl-CoA dehydrogenase in branched-chain amino acid catabolic pathway. Catalyzes the oxidation of 3-hydroxy-2-methylbutanoyl-CoA into 2-methyl-3-oxobutanoyl-CoA, a step in isoleucine degradation pathway. Has hydroxysteroid dehydrogenase activity toward steroid hormones and bile acids. Catalyzes the oxidation of 3alpha-, 17beta-, 20beta- and 21-hydroxysteroids and 7alpha- and 7beta-hydroxy bile acids. Oxidizes allopregnanolone/brexanolone at the 3alpha-hydroxyl group, which is known to be critical for the activation of gamma-aminobutyric acid receptors (GABAARs) chloride channel. Has phospholipase C-like activity toward cardiolipin and its oxidized species. Likely oxidizes the 2'-hydroxyl in the head group of cardiolipin to form a ketone intermediate that undergoes nucleophilic attack by water and fragments into diacylglycerol, dihydroxyacetone and orthophosphate. Has higher affinity for cardiolipin with oxidized fatty acids and may degrade these species during the oxidative stress response to protect cells from apoptosis. By interacting with intracellular amyloid-beta, it may contribute to the neuronal dysfunction associated with Alzheimer disease (AD). Essential for structural and functional integrity of mitochondria. Its function is as follows. In addition to mitochondrial dehydrogenase activity, moonlights as a component of mitochondrial ribonuclease P, a complex that cleaves tRNA molecules in their 5'-ends. Together with TRMT10C/MRPP1, forms a subcomplex of the mitochondrial ribonuclease P, named MRPP1-MRPP2 subcomplex, which displays functions that are independent of the ribonuclease P activity. The MRPP1-MRPP2 subcomplex catalyzes the formation of N(1)-methylguanine and N(1)-methyladenine at position 9 (m1G9 and m1A9, respectively) in tRNAs; HSD17B10/MRPP2 acting as a non-catalytic subunit. The MRPP1-MRPP2 subcomplex also acts as a tRNA maturation platform: following 5'-end cleavage by the mitochondrial ribonuclease P complex, the MRPP1-MRPP2 subcomplex enhances the efficiency of 3'-processing catalyzed by ELAC2, retains the tRNA product after ELAC2 processing and presents the nascent tRNA to the mitochondrial CCA tRNA nucleotidyltransferase TRNT1 enzyme. Associates with mitochondrial DNA complexes at the nucleoids to initiate RNA processing and ribosome assembly. The sequence is that of 3-hydroxyacyl-CoA dehydrogenase type-2 (Hsd17b10) from Rattus norvegicus (Rat).